The sequence spans 1014 residues: MESYLNENFDVKAKHSSEEVLEKWRNLCGVVKNPKRRFRFTANLSKRYEAAAMRRTNQEKLRIAVLVSKAAFQFISGVSPSDYTVPEDVKAAGFEICADELGSIVESHDVKKLKFHGGVDGLAGKLKASPTDGLSTEAAQLSQRQELFGINKFAESEMRGFWVFVWEALQDMTLMILGVCAFVSLIVGIATEGWPKGSHDGLGIAASILLVVFVTATSDYRQSLQFRDLDKEKKKITVQVTRNGFRQKLSIYDLLPGDIVHLAIGDQVPADGLFLSGFSVVIDESSLTGESEPVMVNAQNPFLMSGTKVQDGSCKMMITTVGMRTQWGKLMATLTEGGDDETPLQVKLNGVATIIGKIGLFFAVVTFAVLVQGMFMRKLSTGTHWVWSGDEALELLEYFAIAVTIVVVAVPEGLPLAVTLSLAFAMKKMMNDKALVRHLAACETMGSATTICSDKTGTLTTNHMTVVKSCICMNVQDVANKGSSLQSEIPESAVKLLIQSIFNNTGGEVVVNKHGKTELLGTPTETAILELGLSLGGKFQEERKSYKVIKVEPFNSTKKRMGVVIELPEGGRMRAHTKGASEIVLAACDKVVNSSGEVVPLDEESIKYLNVTINEFANEALRTLCLAYMDIEGGFSPDDAIPASGFTCVGIVGIKDPVRPGVKESVELCRRAGITVRMVTGDNINTAKAIARECGILTDDGIAIEGPVFREKNQEELLELIPKIQVMARSSPMDKHTLVKQLRTTFDEVVAVTGDGTNDAPALHEADIGLAMGIAGTEVAKESADVIILDDNFSTIVTVAKWGRSVYINIQKFVQFQLTVNVVALVVNFSSACLTGSAPLTAVQLLWVNMIMDTLGALALATEPPNDELMKRLPVGRRGNFITNAMWRNILGQAVYQFIVIWILQAKGKAMFGLDGPDSTLMLNTLIFNCFVFCQVFNEISSREMEEIDVFKGILDNYVFVVVIGATVFFQIIIIEFLGTFASTTPLTITQWIFSIFIGFLGMPIAAGLKTIPV.

At Met-1 the chain carries N-acetylmethionine. The Cytoplasmic portion of the chain corresponds to 1–160 (MESYLNENFD…NKFAESEMRG (160 aa)). The segment at 20–31 (VLEKWRNLCGVV) is interaction with calmodulin. Ser-45 carries the phosphoserine; by CPK1 modification. The helical transmembrane segment at 161–181 (FWVFVWEALQDMTLMILGVCA) threads the bilayer. Residues 182–199 (FVSLIVGIATEGWPKGSH) are Lumenal-facing. Residues 200–220 (DGLGIAASILLVVFVTATSDY) form a helical membrane-spanning segment. The Cytoplasmic segment spans residues 221 to 348 (RQSLQFRDLD…DDETPLQVKL (128 aa)). The helical transmembrane segment at 349 to 368 (NGVATIIGKIGLFFAVVTFA) threads the bilayer. The Lumenal portion of the chain corresponds to 369–398 (VLVQGMFMRKLSTGTHWVWSGDEALELLEY). The helical transmembrane segment at 399–416 (FAIAVTIVVVAVPEGLPL) threads the bilayer. Topologically, residues 417-810 (AVTLSLAFAM…KWGRSVYINI (394 aa)) are cytoplasmic. The 4-aspartylphosphate intermediate role is filled by Asp-454. Mg(2+) is bound by residues Asp-755 and Asp-759. Residues 811–829 (QKFVQFQLTVNVVALVVNF) traverse the membrane as a helical segment. Topologically, residues 830 to 840 (SSACLTGSAPL) are lumenal. The chain crosses the membrane as a helical span at residues 841-861 (TAVQLLWVNMIMDTLGALALA). The Cytoplasmic segment spans residues 862–881 (TEPPNDELMKRLPVGRRGNF). The helical transmembrane segment at 882–904 (ITNAMWRNILGQAVYQFIVIWIL) threads the bilayer. Residues 905–916 (QAKGKAMFGLDG) lie on the Lumenal side of the membrane. Residues 917–938 (PDSTLMLNTLIFNCFVFCQVFN) traverse the membrane as a helical segment. Residues 939–956 (EISSREMEEIDVFKGILD) lie on the Cytoplasmic side of the membrane. Residues 957 to 978 (NYVFVVVIGATVFFQIIIIEFL) form a helical membrane-spanning segment. At 979-988 (GTFASTTPLT) the chain is on the lumenal side. Residues 989 to 1010 (ITQWIFSIFIGFLGMPIAAGLK) form a helical membrane-spanning segment. The Cytoplasmic segment spans residues 1011-1014 (TIPV).

Belongs to the cation transport ATPase (P-type) (TC 3.A.3) family. Type IIB subfamily.

The protein localises to the endoplasmic reticulum membrane. The catalysed reaction is Ca(2+)(in) + ATP + H2O = Ca(2+)(out) + ADP + phosphate + H(+). Its activity is regulated as follows. Activated by calmodulin. In terms of biological role, this magnesium-dependent enzyme catalyzes the hydrolysis of ATP coupled with the translocation of calcium from the cytosol into the endoplasmic reticulum. In Arabidopsis thaliana (Mouse-ear cress), this protein is Calcium-transporting ATPase 2, plasma membrane-type (ACA2).